The chain runs to 291 residues: Ribosomal RNA small subunit methyltransferase A (291 aa).

Residues Asn28, Leu30, Gly55, Glu77, Asp103, and Asn123 each coordinate S-adenosyl-L-methionine.

This sequence belongs to the class I-like SAM-binding methyltransferase superfamily. rRNA adenine N(6)-methyltransferase family. RsmA subfamily.

It localises to the cytoplasm. It catalyses the reaction adenosine(1518)/adenosine(1519) in 16S rRNA + 4 S-adenosyl-L-methionine = N(6)-dimethyladenosine(1518)/N(6)-dimethyladenosine(1519) in 16S rRNA + 4 S-adenosyl-L-homocysteine + 4 H(+). Specifically dimethylates two adjacent adenosines (A1518 and A1519) in the loop of a conserved hairpin near the 3'-end of 16S rRNA in the 30S particle. May play a critical role in biogenesis of 30S subunits. This chain is Ribosomal RNA small subunit methyltransferase A, found in Azorhizobium caulinodans (strain ATCC 43989 / DSM 5975 / JCM 20966 / LMG 6465 / NBRC 14845 / NCIMB 13405 / ORS 571).